We begin with the raw amino-acid sequence, 466 residues long: 55 kDa erythrocyte membrane protein (466 aa).

N-acetylthreonine is present on T2. A phosphoserine mark is found at S13 and S19. Phosphothreonine is present on T49. A phosphoserine mark is found at S52, S57, and S110. A PDZ domain is found at 71-152; that stretch reads LIQFEKVTEE…MISLKVIPNQ (82 aa). Residues 158–228 form the SH3 domain; the sequence is ALQMFMRAQF…PSPELQEWRV (71 aa). At S243 the chain carries Phosphoserine. Residues 268–466 are interaction with PALS1; that stretch reads VVSYEEVVRL…PQWVPVSWVY (199 aa). The Guanylate kinase-like domain maps to 282-451; sequence RKTLVLIGAS…TLKKLQEAFD (170 aa).

The protein belongs to the MAGUK family. As to quaternary structure, heterodimer with PALS1. Interacts with DLG5 and NF2. Interacts (via guanylate kinase-like domain) with WHRN (via third PDZ domain). Post-translationally, palmitoylated. Ubiquitous.

It localises to the cell membrane. The protein localises to the cell projection. It is found in the stereocilium. Essential regulator of neutrophil polarity. Regulates neutrophil polarization by regulating AKT1 phosphorylation through a mechanism that is independent of PIK3CG activity. This is 55 kDa erythrocyte membrane protein (MPP1) from Homo sapiens (Human).